We begin with the raw amino-acid sequence, 269 residues long: Phosphate import ATP-binding protein PstB 1 (269 aa).

The ABC transporter domain occupies Phe16 to Pro255. Gly48–Ser55 contacts ATP.

This sequence belongs to the ABC transporter superfamily. Phosphate importer (TC 3.A.1.7) family. In terms of assembly, the complex is composed of two ATP-binding proteins (PstB), two transmembrane proteins (PstC and PstA) and a solute-binding protein (PstS).

Its subcellular location is the cell inner membrane. It carries out the reaction phosphate(out) + ATP + H2O = ADP + 2 phosphate(in) + H(+). Functionally, part of the ABC transporter complex PstSACB involved in phosphate import. Responsible for energy coupling to the transport system. The sequence is that of Phosphate import ATP-binding protein PstB 1 from Synechocystis sp. (strain ATCC 27184 / PCC 6803 / Kazusa).